The chain runs to 460 residues: Nucleosome assembly protein 1-like 2 (460 aa).

Over residues 1–11 (MAESVDHKELS) the composition is skewed to basic and acidic residues. Disordered stretches follow at residues 1 to 87 (MAES…DSDR) and 213 to 238 (DEEEEEEEDDSAGATGGEEVNEEDPK). Over residues 213–223 (DEEEEEEEDDS) the composition is skewed to acidic residues. The Nuclear localization signal signature appears at 346-352 (IKKKQRH).

This sequence belongs to the nucleosome assembly protein (NAP) family. In terms of tissue distribution, brain, specifically expressed in neurons.

The protein localises to the nucleus. Acidic protein which may be involved in interactions with other proteins or DNA. The polypeptide is Nucleosome assembly protein 1-like 2 (Nap1l2) (Mus musculus (Mouse)).